The chain runs to 480 residues: MPKEGITPRAQDYSQWYLDIVQQADLADYAEVVKGCIVFKPTGYALWEAIQRGLDDRIKATGHVNAYFPLLIPKSFLMKEAEHVEGFAPEVAEVTRAGGEDLAEPYVIRPTSETIIGYFYSKWVRSYRDLPLLINQWANVMRWEMRTRPFLRTTEFLWQEGHTVHATEEDAERETLLILHEVYADFVEKDMAIPVIRGLKSEKEKFPGALRSYCIEAMMQDGRALQAGTSHNLGQNFARAFDITYTDQHNTIQYAWTTSWGVSTRLIGALIMTHSDDEGLVIPPRLAPTQVVVVPIYRNDAERSVVMEAVQRMTAEWKGLLRFKVDDRDNLTPGFKFNEWELKGVPIRVEIGPKDIEKGSVAIARRDQPGREGKSFVPQEGLTARLAALLEEIQQALYRRALAFRETHTADVTTYEELKQQVERGFARCYWAGTMEDEKRIQEETRATIRCIPLDQPQQAGRCIYTGKETTQQVIFARAY.

The protein belongs to the class-II aminoacyl-tRNA synthetase family. ProS type 3 subfamily. Homodimer.

It localises to the cytoplasm. It catalyses the reaction tRNA(Pro) + L-proline + ATP = L-prolyl-tRNA(Pro) + AMP + diphosphate. Functionally, catalyzes the attachment of proline to tRNA(Pro) in a two-step reaction: proline is first activated by ATP to form Pro-AMP and then transferred to the acceptor end of tRNA(Pro). The chain is Proline--tRNA ligase from Roseiflexus castenholzii (strain DSM 13941 / HLO8).